A 469-amino-acid polypeptide reads, in one-letter code: SWI/SNF complex subunit SWI3B (469 aa).

Residues 1 to 42 (MAMKAPDPGGSGEILPSTPSLSETTSGGAAAASKSAQLPSSS) are disordered. The segment covering 15-42 (LPSTPSLSETTSGGAAAASKSAQLPSSS) has biased composition (low complexity). In terms of domain architecture, SWIRM spans 48–145 (IHVPSYSSWF…YNSSASAKPL (98 aa)). The SANT domain occupies 223–274 (ESKPEWSDKEILLLLEAVMHYGDDWKKVASHVIGRTEKDCVSQFVKLPFGEQ). 2 stretches are compositionally biased toward basic and acidic residues: residues 293 to 306 (DSDIPESEGIDKDG) and 360 to 369 (DKNASRDPNR). Disordered regions lie at residues 293–314 (DSDIPESEGIDKDGSSPNKRIK) and 360–387 (DKNASRDPNRQDANAASSGETTRNESER). The span at 370–380 (QDANAASSGET) shows a compositional bias: polar residues. Residues 423-447 (VHFEKLDLEMERSRKQLEEVRNLLF) are a coiled coil.

Homodimers and heterodimers. Interacts with SWI3A, SWI3C, SWI3D, BSH, BRM and FCA (via C-terminus), and (via N-terminus) with HAB1. Interacts with MORC6 and SUVH9. Expressed in roots, stems, leaves, flowers and siliques.

It is found in the nucleus. In terms of biological role, component of a multiprotein complex equivalent of the SWI/SNF complex, an ATP-dependent chromatin-remodeling complex, which is required for the positive and negative regulation of gene expression of a large number of genes. It changes chromatin structure by altering DNA-histone contacts within a nucleosome, leading eventually to a change in nucleosome position, thus facilitating or repressing binding of gene-specific transcription factors. May play an essential role in the transition from the vegetative to the reproductive phase of development. May be a positive regulator of ABA signaling. The sequence is that of SWI/SNF complex subunit SWI3B (SWI3B) from Arabidopsis thaliana (Mouse-ear cress).